Reading from the N-terminus, the 387-residue chain is Succinyl-diaminopimelate desuccinylase (387 aa).

His-74 contributes to the Zn(2+) binding site. The active site involves Asp-76. Asp-107 serves as a coordination point for Zn(2+). Glu-142 acts as the Proton acceptor in catalysis. Residues Glu-143, Glu-171, and His-360 each coordinate Zn(2+).

It belongs to the peptidase M20A family. DapE subfamily. Homodimer. Zn(2+) is required as a cofactor. The cofactor is Co(2+).

It carries out the reaction N-succinyl-(2S,6S)-2,6-diaminopimelate + H2O = (2S,6S)-2,6-diaminopimelate + succinate. Its pathway is amino-acid biosynthesis; L-lysine biosynthesis via DAP pathway; LL-2,6-diaminopimelate from (S)-tetrahydrodipicolinate (succinylase route): step 3/3. In terms of biological role, catalyzes the hydrolysis of N-succinyl-L,L-diaminopimelic acid (SDAP), forming succinate and LL-2,6-diaminopimelate (DAP), an intermediate involved in the bacterial biosynthesis of lysine and meso-diaminopimelic acid, an essential component of bacterial cell walls. This is Succinyl-diaminopimelate desuccinylase from Rhodopseudomonas palustris (strain TIE-1).